The following is a 389-amino-acid chain: Oxytocin receptor (389 aa).

Residues 1-27 (MEGELAANWSTEAVNSSAAPPGAEGNC) are disordered. The Extracellular segment spans residues 1 to 38 (MEGELAANWSTEAVNSSAAPPGAEGNCTAGPPRRNEAL). Residues Asn-8, Asn-15, and Asn-26 are each glycosylated (N-linked (GlcNAc...) asparagine). The segment covering 8-18 (NWSTEAVNSSA) has biased composition (polar residues). The helical transmembrane segment at 39–63 (ARVEVAVLCLILFLALSGNACVLLA) threads the bilayer. Residues 64–74 (LRTTRHKHSRL) lie on the Cytoplasmic side of the membrane. A helical transmembrane segment spans residues 75–97 (FFFMKHLSIADLVVAVFQVLPQL). The Extracellular segment spans residues 98–113 (LWDITFRFYGPDLLCR). Cysteines 112 and 187 form a disulfide. A helical transmembrane segment spans residues 114-135 (LVKYLQVVGMFASTYLLLLMSL). The Cytoplasmic segment spans residues 136–154 (DRCLAICQPLRSLRRRTDR). The chain crosses the membrane as a helical span at residues 155-175 (LAVLATWLGCLVASAPQVHIF). Over 176–202 (SLREVADGVFDCWAVFIQPWGPKAYIT) the chain is Extracellular. Residues 203–225 (WITLAVYIVPVIVLAACYGLISF) form a helical membrane-spanning segment. Residues 226–275 (KIWQNLRLKTAAAAAAEAPEGAAAGDGGRMALARVSSVKLISKAKIRTVK) lie on the Cytoplasmic side of the membrane. Residues 276-294 (MTFIIVLAFIVCWTPFFFV) form a helical membrane-spanning segment. Over 295–309 (QMWSVWDANAPKEAS) the chain is Extracellular. Residues 310 to 332 (AFIIVMLLASLNSCCNPWIYMLF) form a helical membrane-spanning segment. Topologically, residues 333–389 (TGHLFHELVQRFLCCSASYLKGNRLGETSTSKKSNSSSFVLSHRSSSQRSCSQPSTA) are cytoplasmic. A disordered region spans residues 358–389 (GETSTSKKSNSSSFVLSHRSSSQRSCSQPSTA). Low complexity predominate over residues 360–389 (TSTSKKSNSSSFVLSHRSSSQRSCSQPSTA). Phosphoserine is present on residues Ser-366 and Ser-368.

Belongs to the G-protein coupled receptor 1 family. Vasopressin/oxytocin receptor subfamily.

The protein localises to the cell membrane. In terms of biological role, receptor for oxytocin. The activity of this receptor is mediated by G proteins which activate a phosphatidylinositol-calcium second messenger system. This chain is Oxytocin receptor (OXTR), found in Macaca mulatta (Rhesus macaque).